We begin with the raw amino-acid sequence, 82 residues long: Small ribosomal subunit protein bS16 (82 aa).

It belongs to the bacterial ribosomal protein bS16 family.

The sequence is that of Small ribosomal subunit protein bS16 from Actinobacillus pleuropneumoniae serotype 5b (strain L20).